The sequence spans 309 residues: Probable manganese-dependent inorganic pyrophosphatase (309 aa).

The Mn(2+) site is built by H9, D13, D15, D75, H97, and D149.

The protein belongs to the PPase class C family. Mn(2+) is required as a cofactor.

It is found in the cytoplasm. It carries out the reaction diphosphate + H2O = 2 phosphate + H(+). This chain is Probable manganese-dependent inorganic pyrophosphatase, found in Bacillus cereus (strain AH187).